Consider the following 335-residue polypeptide: V-set and immunoglobulin domain-containing protein 1 (335 aa).

A signal peptide spans 1 to 21 (MFPTMLKIFPILATLAGHVHG). Residues 22–136 (VVVTVPEKTV…SQKSVIVNVL (115 aa)) form the Ig-like V-type domain. Residues 22-233 (VVVTVPEKTV…DLTSMHSDGN (212 aa)) lie on the Extracellular side of the membrane. 2 disulfides stabilise this stretch: Cys-43/Cys-115 and Cys-160/Cys-210. The Ig-like C2-type domain occupies 139-226 (PSKPFCKIEG…GNSTCELDLT (88 aa)). Residues 234 to 254 (IVAGALIGAILAAVIICAIVW) form a helical membrane-spanning segment. Over 255-335 (VLTKKAKKKK…QKEETAGSSF (81 aa)) the chain is Cytoplasmic. Positions 266–335 (SSNEMQVMAQ…QKEETAGSSF (70 aa)) are disordered. The segment covering 268–306 (NEMQVMAQKQSNAEYAQVPNEENTPATAVLPSNATNEQP) has biased composition (polar residues). Residues 319–335 (NDEKHEVQKEETAGSSF) are compositionally biased toward basic and acidic residues.

As to expression, expressed in thymocytes.

It is found in the membrane. This chain is V-set and immunoglobulin domain-containing protein 1 (VSIG1), found in Gallus gallus (Chicken).